Here is a 339-residue protein sequence, read N- to C-terminus: GATA transcription factor 5 (339 aa).

Disordered regions lie at residues 68-88 (MVRV…RSSD), 126-145 (EYSG…WLTG), 163-206 (PVPA…PSSP), and 221-242 (ERPP…SGEL). Residues 126–136 (EYSGPNLTGTP) show a composition bias toward polar residues. The short motif at 167 to 174 (KARSKRNR) is the Nuclear localization signal element. The segment covering 181–206 (SLGSSSSSGPSSSGSTSSSSSGPSSP) has biased composition (low complexity). Residues 245–299 (LQPQRKCSHCGVQKTPQWRAGPMGAKTLCNACGVRYKSGRLLPEYRPACSPTFSS) form a GATA-type zinc finger. The tract at residues 314–339 (RKKEPTSDNETGLNQLVQSPQAVPSF) is disordered. A compositionally biased stretch (polar residues) spans 321 to 339 (DNETGLNQLVQSPQAVPSF).

It belongs to the type IV zinc-finger family. Class A subfamily.

The protein localises to the nucleus. In terms of biological role, transcriptional activator that specifically binds 5'-GATA-3' or 5'-GAT-3' motifs within gene promoters. May be involved in the regulation of some light-responsive genes. This Arabidopsis thaliana (Mouse-ear cress) protein is GATA transcription factor 5 (GATA5).